The primary structure comprises 369 residues: Trans-enoyl reductase pyiC (369 aa).

52–55 (CDYK) is a binding site for NADP(+). 137–144 (TGIGTLGM) serves as a coordination point for substrate. Residues 195-198 (SPKN), Tyr213, and 260-261 (LE) each bind NADP(+). A substrate-binding site is contributed by 280–284 (GPLLL). 349-350 (VS) contacts NADP(+).

Belongs to the zinc-containing alcohol dehydrogenase family. In terms of assembly, monomer.

The protein operates within mycotoxin biosynthesis. In terms of biological role, trans-enoyl reductase; part of the gene cluster that mediates the biosynthesis of the mycotoxin pyrichalasin H, a tyrosine-derived cytochalasan that inhibits the growth of rice seedlings, but also inhibits lymphocyte capping and actin polymerization and alters cell morphology. Pyrichalasin H is indicated as the responsible agent for the genus-specific pathogenicity of M.grisea toward crabgrass. The first step in the pathway is catalyzed by the O-methyltransferase pyiA which methylates free tyrosine to generate the precursor O-methyltyrosine. The hybrid PKS-NRPS pyiS, assisted by the enoyl reductase pyiC, are responsible for fusion of the O-methyltyrosine precursor and the polyketide backbone. The polyketide synthase module (PKS) of pyiS is responsible for the synthesis of the polyketide backbone and the downstream nonribosomal peptide synthetase (NRPS) amidates the carboxyl end of the polyketide with the O-methyltyrosine precursor. As the NRPS A-domain demonstrates substrate tolerance, pyiS can also use phenylalanine, tyrosine and even para-chlorophenylalanine as amino acid precursor, which leads to the production of novel cytochalasans, including halogenated cytochalasans. Because pyiS lacks a designated enoylreductase (ER) domain, the required activity is provided the enoyl reductase pyiC. Reduction by the hydrolyase pyiE, followed by dehydration and intra-molecular Diels-Alder cyclization by the Diels-Alderase pyiF then yield the required isoindolone-fused macrocycle. The tailoring cytochrome P450 monooxygenases piyD and piyG catalyze the hydroxylation at C-18 and C-7, respectivily, whereas the short-chain dehydrogenase/reductase pyiH reduces the carbonyl at C-21 in preparation for the transfer of an acetyl group by the acetyltransferase pyiB. These 3 reactions whose order is not clear yet, lead to the production of O-methylpyrichalasin J, a deacetylated pyrichalasin H. Finally, pyiB to converts O-methylpyrichalasin J into the final product pyrichalasin H via acetylation of C-21. This chain is Trans-enoyl reductase pyiC, found in Pyricularia grisea (Crabgrass-specific blast fungus).